Consider the following 301-residue polypeptide: Homoserine kinase (301 aa).

89–99 (KPGSGLGSSSA) lines the ATP pocket.

The protein belongs to the GHMP kinase family. Homoserine kinase subfamily.

The protein resides in the cytoplasm. It catalyses the reaction L-homoserine + ATP = O-phospho-L-homoserine + ADP + H(+). Its pathway is amino-acid biosynthesis; L-threonine biosynthesis; L-threonine from L-aspartate: step 4/5. Functionally, catalyzes the ATP-dependent phosphorylation of L-homoserine to L-homoserine phosphate. This Methanococcus maripaludis (strain C5 / ATCC BAA-1333) protein is Homoserine kinase.